The following is a 243-amino-acid chain: Adenosine 5'-phosphosulfate reductase (243 aa).

[4Fe-4S] cluster-binding residues include cysteine 126, cysteine 127, cysteine 209, and cysteine 212. The active-site Nucleophile; cysteine thiosulfonate intermediate is the cysteine 235.

Belongs to the PAPS reductase family. CysH subfamily. [4Fe-4S] cluster is required as a cofactor.

It localises to the cytoplasm. It carries out the reaction [thioredoxin]-disulfide + sulfite + AMP + 2 H(+) = adenosine 5'-phosphosulfate + [thioredoxin]-dithiol. It participates in sulfur metabolism; hydrogen sulfide biosynthesis; sulfite from sulfate. Functionally, catalyzes the formation of sulfite from adenosine 5'-phosphosulfate (APS) using thioredoxin as an electron donor. In Staphylococcus epidermidis (strain ATCC 35984 / DSM 28319 / BCRC 17069 / CCUG 31568 / BM 3577 / RP62A), this protein is Adenosine 5'-phosphosulfate reductase.